Here is a 467-residue protein sequence, read N- to C-terminus: Fumarate hydratase class II (467 aa).

Residues 98–100 (SGT), Arg-126, 129–132 (HPND), 139–141 (SSN), and Thr-187 each bind substrate. The active-site Proton donor/acceptor is His-188. The active site involves Ser-318. Residues Ser-319 and 324–326 (KVN) each bind substrate.

The protein belongs to the class-II fumarase/aspartase family. Fumarase subfamily. As to quaternary structure, homotetramer.

It is found in the cytoplasm. It carries out the reaction (S)-malate = fumarate + H2O. The protein operates within carbohydrate metabolism; tricarboxylic acid cycle; (S)-malate from fumarate: step 1/1. Its activity is regulated as follows. Inhibited by ATP, citrate and S-2,3-dicarboxyaziridine. Functionally, involved in the TCA cycle. FumC seems to be a backup enzyme for FumA under conditions of iron limitation and oxidative stress. Catalyzes the stereospecific interconversion of fumarate to L-malate. This is Fumarate hydratase class II from Escherichia coli (strain K12).